The primary structure comprises 201 residues: Superoxide dismutase [Mn] (201 aa).

4 residues coordinate Mn(2+): His27, His81, Asp163, and His167.

It belongs to the iron/manganese superoxide dismutase family. Homodimer. Mn(2+) serves as cofactor.

The enzyme catalyses 2 superoxide + 2 H(+) = H2O2 + O2. Functionally, destroys superoxide anion radicals which are normally produced within the cells and which are toxic to biological systems. May play a critical role against oxidative stress, affecting both the survival and the virulence of S.pneumoniae. The sequence is that of Superoxide dismutase [Mn] (sodA) from Streptococcus pneumoniae serotype 4 (strain ATCC BAA-334 / TIGR4).